The following is a 287-amino-acid chain: MAAPIVDAEYLKEITKARRELRSLIANKNCAPIMLRLAWHDAGTYDAQSKTGGPNGSIRNEEEHTHGANSGLKIALDLCEGVKAKHPKITYADLYQLAGVVAVEVTGGPDIVFVPGRKDSNVCPKEGRLPDAKQGFQHLRDVFYRMGLSDKDIVALSGGHTLGRAHPERSGFDGPWTQEPLKFDNSYFVELLKGESEGLLKLPTDKTLLEDPEFRRLVELYAKDEDAFFRDYAESHKKLSELGFNPNSSAGKAVADSTILAQSAFGVAVAAAVVAFGYFYEIRKRMK.

Position 2 is an N-acetylalanine (Ala-2). His-40 acts as the Proton acceptor in catalysis. A disordered region spans residues 46 to 66 (DAQSKTGGPNGSIRNEEEHTH). His-160 contacts heme b. K(+)-binding residues include Thr-161, Thr-177, and Asp-184. A helical transmembrane segment spans residues 259–279 (ILAQSAFGVAVAAAVVAFGYF). Positions 281 to 287 (EIRKRMK) match the AKR2A-binding sequence (ABS) required for peroxisome membrane targeting motif.

It belongs to the peroxidase family. Ascorbate peroxidase subfamily. As to quaternary structure, interacts via its C-terminal region with AKR2A and AKR2B. The cofactor is heme b.

It is found in the peroxisome membrane. The protein localises to the glyoxysome membrane. The catalysed reaction is L-ascorbate + H2O2 = L-dehydroascorbate + 2 H2O. Functionally, plays a key role in hydrogen peroxide removal. This chain is L-ascorbate peroxidase 3 (APX3), found in Arabidopsis thaliana (Mouse-ear cress).